The chain runs to 422 residues: Dihydrolipoyllysine-residue succinyltransferase component of 2-oxoglutarate dehydrogenase complex (422 aa).

In terms of domain architecture, Lipoyl-binding spans 1 to 76; the sequence is MPEVKVPELA…EVGQAIAIIG (76 aa). Lys-42 carries the post-translational modification N6-lipoyllysine. Residues 77–184 form a disordered region; the sequence is EGSGNASKEN…APAKEEKKYN (108 aa). Composition is skewed to polar residues over residues 80–94 and 116–130; these read GNAS…TPQQ and NQAN…NATP. The 37-residue stretch at 127–163 folds into the Peripheral subunit-binding (PSBD) domain; it reads NATPSARRYARENGVNLAEVSPKTNDVVRKEDIDKKQ. A compositionally biased stretch (basic and acidic residues) spans 152–163; that stretch reads DVVRKEDIDKKQ. Low complexity predominate over residues 164-176; the sequence is QAPASTQTTQQAP. Residues His-393 and Asp-397 contribute to the active site.

It belongs to the 2-oxoacid dehydrogenase family. Forms a 24-polypeptide structural core with octahedral symmetry. Part of the 2-oxoglutarate dehydrogenase (OGDH) complex composed of E1 (2-oxoglutarate dehydrogenase), E2 (dihydrolipoamide succinyltransferase) and E3 (dihydrolipoamide dehydrogenase); the complex contains multiple copies of the three enzymatic components (E1, E2 and E3). (R)-lipoate serves as cofactor.

The enzyme catalyses N(6)-[(R)-dihydrolipoyl]-L-lysyl-[protein] + succinyl-CoA = N(6)-[(R)-S(8)-succinyldihydrolipoyl]-L-lysyl-[protein] + CoA. Its pathway is amino-acid degradation; L-lysine degradation via saccharopine pathway; glutaryl-CoA from L-lysine: step 6/6. E2 component of the 2-oxoglutarate dehydrogenase (OGDH) complex which catalyzes the second step in the conversion of 2-oxoglutarate to succinyl-CoA and CO(2). The polypeptide is Dihydrolipoyllysine-residue succinyltransferase component of 2-oxoglutarate dehydrogenase complex (odhB) (Staphylococcus aureus (strain Mu50 / ATCC 700699)).